Reading from the N-terminus, the 227-residue chain is Ribose-5-phosphate isomerase A (227 aa).

Residues 26–29, 82–85, and 95–98 each bind substrate; these read TGST, DGAD, and KGGG. The active-site Proton acceptor is glutamate 104. Residue lysine 122 coordinates substrate.

Belongs to the ribose 5-phosphate isomerase family. As to quaternary structure, homodimer.

The enzyme catalyses aldehydo-D-ribose 5-phosphate = D-ribulose 5-phosphate. It participates in carbohydrate degradation; pentose phosphate pathway; D-ribose 5-phosphate from D-ribulose 5-phosphate (non-oxidative stage): step 1/1. In terms of biological role, catalyzes the reversible conversion of ribose-5-phosphate to ribulose 5-phosphate. The polypeptide is Ribose-5-phosphate isomerase A (Streptococcus pyogenes serotype M1).